The sequence spans 345 residues: Diacylglycerol O-acyltransferase 1 (345 aa).

The Cytoplasmic portion of the chain corresponds to 1–49; sequence MSEETSIPGIIASTPPISKDSRRNVSHWLQALAVFLHSVSLTLTASWYT. The helical transmembrane segment at 50–70 threads the bilayer; the sequence is VLWAFLPFWPFLIVYLIWLIY. At 71 to 113 the chain is on the lumenal side; sequence DDGFVTGKDRQKRWLRNAPPYRWFCHYFPIRLHKTTELDSEKN. The chain crosses the membrane as a helical span at residues 114-134; sequence YIFGYHPHGIISLGAFGGFAS. Residues 135-141 lie on the Cytoplasmic side of the membrane; it reads EGADFSK. A helical membrane pass occupies residues 142–162; the sequence is LFPGINVSVLTLNSNFYVPVY. Topologically, residues 163–216 are lumenal; it reads RDYLMALNINSVSKKSCVSILSRKPGDSVLIVIGGAQESLLSRPGQNNLVLKKR. The chain crosses the membrane as a helical span at residues 217–237; that stretch reads FGFVKLAFLTGSSLVPCFAFG. Over 238–345 the chain is Cytoplasmic; that stretch reads ESDIFEQVDN…NRISELKLSA (108 aa).

The protein belongs to the diacylglycerol acyltransferase family.

Its subcellular location is the lipid droplet. The protein localises to the endoplasmic reticulum membrane. It carries out the reaction an acyl-CoA + a 1,2-diacyl-sn-glycerol = a triacyl-sn-glycerol + CoA. The catalysed reaction is a 2-acylglycerol + an acyl-CoA = a 1,2-diacyl-sn-glycerol + CoA. It functions in the pathway glycerolipid metabolism; triacylglycerol biosynthesis. In terms of biological role, catalyzes the terminal and only committed step in triacylglycerol (TAG) synthesis by using diacylglycerol (DAG) and fatty acyl-CoA as substrates. Required for storage lipid synthesis. Major DAG esterifying enzyme in stationary phase when TAG production is particularly active. Involved in lipid particle synthesis from the endoplasmic reticulum, promoting localized TAG production at discrete ER subdomains. In Schizosaccharomyces pombe (strain 972 / ATCC 24843) (Fission yeast), this protein is Diacylglycerol O-acyltransferase 1 (dga1).